The sequence spans 765 residues: Spastin (765 aa).

A disordered region spans residues 1-94 (MVRTKNQSSS…TSGYGPRGGT (94 aa)). The Cytoplasmic portion of the chain corresponds to 1–107 (MVRTKNQSSS…KQNLYVVSFP (107 aa)). The required for localization to punctate cytoplasmic foci stretch occupies residues 1–195 (MVRTKNQSSS…ALLPLEMATN (195 aa)). The span at 8-19 (SSSSSASSSTKS) shows a compositional bias: low complexity. Residues 48 to 58 (SSKLSSNRQRA) are compositionally biased toward polar residues. Residues 59-72 (TITTTTTSTTPGSS) show a composition bias toward low complexity. Residues 108–128 (IIFLFNVLRSLIYQLFCIFRY) constitute an intramembrane region (helical). Topologically, residues 129-765 (LYCASTKVIY…WSQDYGDITI (637 aa)) are cytoplasmic. The sufficient for interaction with microtubules and microtubule severing stretch occupies residues 193–765 (ATNRGGSGGY…WSQDYGDITI (573 aa)). Residues 218–293 (HRRAFEYISK…SMARDRLHFL (76 aa)) form the MIT domain. The segment at 329–462 (QTNSKAAAVE…GSGSGASTPM (134 aa)) is disordered. Residues 355-364 (SGTGSSAGTS) are compositionally biased toward low complexity. Composition is skewed to polar residues over residues 389–407 (NKSQTLPRNLGSKTTSTSV) and 428–444 (QFSSGRNTPPQRSRTPI). Positions 446–462 (NNAASGSGSGSGASTPM) are required for interaction with microtubules. 530–537 (GPPGNGKT) contacts ATP.

This sequence belongs to the AAA ATPase family. Spastin subfamily. In terms of assembly, homohexamer. The homohexamer is stabilized by ATP-binding. The homohexamer may adopt a ring conformation through which microtubules pass prior to being severed. Interacts with microtubules. Interacts with atl; may be involved in microtubule dynamics.

It localises to the membrane. It is found in the cytoplasm. The protein resides in the cytoskeleton. Its subcellular location is the microtubule organizing center. The protein localises to the centrosome. It localises to the chromosome. It is found in the lipid droplet. The catalysed reaction is n ATP + n H2O + a microtubule = n ADP + n phosphate + (n+1) alpha/beta tubulin heterodimers.. Functionally, ATP-dependent microtubule severing protein. Stimulates microtubule minus-end depolymerization and poleward microtubule flux in the mitotic spindle. Regulates microtubule stability in the neuromuscular junction synapse. Involved in lipid metabolism by regulating the size and distribution of lipid droplets. Involved in axon regeneration by regulating microtubule severing. The polypeptide is Spastin (Drosophila mojavensis (Fruit fly)).